The sequence spans 601 residues: ATP-dependent RNA helicase DeaD (601 aa).

Residues 6–34 (STFSFLGLNPFIIQSLNEMGYVKPSPIQA) carry the Q motif motif. The Helicase ATP-binding domain occupies 37–208 (IPLLLEGRDV…KRFMRNPKEI (172 aa)). 50 to 57 (AQTGSGKT) serves as a coordination point for ATP. The DEAD box motif lies at 156 to 159 (DEAD). The region spanning 231–378 (KTDALIRFLE…EVQLPKVELL (148 aa)) is the Helicase C-terminal domain. Basic and acidic residues predominate over residues 552 to 576 (SRHYENKTTHRSIFNKDKNSNRRVS). The interval 552–601 (SRHYENKTTHRSIFNKDKNSNRRVSDGSFNKSNSPKKTEFKSSFFRRRNV) is disordered.

The protein belongs to the DEAD box helicase family. DeaD/CsdA subfamily.

It is found in the cytoplasm. The catalysed reaction is ATP + H2O = ADP + phosphate + H(+). Functionally, DEAD-box RNA helicase involved in various cellular processes at low temperature, including ribosome biogenesis, mRNA degradation and translation initiation. This chain is ATP-dependent RNA helicase DeaD, found in Buchnera aphidicola subsp. Acyrthosiphon pisum (strain APS) (Acyrthosiphon pisum symbiotic bacterium).